A 339-amino-acid polypeptide reads, in one-letter code: Anthranilate phosphoribosyltransferase (339 aa).

5-phospho-alpha-D-ribose 1-diphosphate is bound by residues Gly-81, 84-85 (GD), Ser-89, 91-94 (NVSS), 109-117 (KHGNRALSS), and Ala-121. Gly-81 is a binding site for anthranilate. Position 93 (Ser-93) interacts with Mg(2+). Asn-112 provides a ligand contact to anthranilate. Residue Arg-167 participates in anthranilate binding. Residues Asp-225 and Glu-226 each coordinate Mg(2+).

It belongs to the anthranilate phosphoribosyltransferase family. Homodimer. The cofactor is Mg(2+).

It carries out the reaction N-(5-phospho-beta-D-ribosyl)anthranilate + diphosphate = 5-phospho-alpha-D-ribose 1-diphosphate + anthranilate. It participates in amino-acid biosynthesis; L-tryptophan biosynthesis; L-tryptophan from chorismate: step 2/5. Functionally, catalyzes the transfer of the phosphoribosyl group of 5-phosphorylribose-1-pyrophosphate (PRPP) to anthranilate to yield N-(5'-phosphoribosyl)-anthranilate (PRA). In Brucella abortus (strain S19), this protein is Anthranilate phosphoribosyltransferase.